A 54-amino-acid chain; its full sequence is Photoreceptor disk component PRCD (54 aa).

Cys2 carries the S-palmitoyl cysteine lipid modification. The disordered stretch occupies residues 24 to 54 (QPEPNGVDGAVSGSSLETDLQSSGREKEPLK). Positions 35-46 (SGSSLETDLQSS) are enriched in polar residues.

The protein belongs to the PRCD family. As to quaternary structure, interacts with RHO/rhodopsin; the interaction promotes PRCD stability. In terms of processing, palmitoylated at Cys-2. Palmitoylation is essential for protein stability and trafficking to the photoreceptor outer segment, but does not appear to be essential for membrane localization. Probably palmitoylated by ZDHHC3. Phosphorylated. Expressed in retina (at protein level).

The protein localises to the cell projection. Its subcellular location is the cilium. It localises to the photoreceptor outer segment. The protein resides in the membrane. It is found in the endoplasmic reticulum. The protein localises to the golgi apparatus. Its function is as follows. Involved in vision. The protein is Photoreceptor disk component PRCD of Bos taurus (Bovine).